The primary structure comprises 553 residues: Major facilitator-type transporter hxnZ (553 aa).

5 helical membrane-spanning segments follow: residues 89–109 (FTVAGFGWIVDNFCSQGISAV), 128–148 (VAYYVGMIIGASFWGISSDLI), 152–172 (PAFNSTLAIAGIFLCAAAGTS), 174–194 (FIAFSALWAVIGTAAGGNVVC), and 213–233 (ALSGWWNLGQLVVSLLAWVFL). Asparagine 235 carries N-linked (GlcNAc...) asparagine glycosylation. Transmembrane regions (helical) follow at residues 257 to 277 (YTLITLGGLSLAFTFVRIFVF), 366 to 386 (ALIWAVWLIIGIAYPLYFNFL), 409 to 429 (IQSAVGVVGPLSAAVLVNTFL), 433 to 453 (WMMGISSIVTGVFLFAYVGVK), 459 to 481 (LAFSCVTGLLANFANQLSEYAIM), 496 to 516 (TASGTAASLLRFGGLVASLIA), and 525 to 545 (PIYASAALWVGVGVLCFGLPF).

The protein belongs to the major facilitator superfamily.

The protein resides in the cell membrane. Its function is as follows. Major facilitator-type transporter, part of the hnx cluster involved in the purine degradation. The nicotinate hydroxylase hnxS accepts nicotinate as a substrate and catalyzes the first step of nicotinate catabolism. The major facilitator-type transporters hxnP and hxnZ are probably involved in the uptake of nicotinate-derived metabolites, and the oxidoreductases hxnT and hxnY in the further metabolism of 6-OH nicotinic acid. This chain is Major facilitator-type transporter hxnZ, found in Emericella nidulans (strain FGSC A4 / ATCC 38163 / CBS 112.46 / NRRL 194 / M139) (Aspergillus nidulans).